Consider the following 332-residue polypeptide: HTH-type transcriptional regulator IdnR (332 aa).

Positions 6–60 (ISLQDIATLAGVTKMTVSRYIRSPKKVAKETGERIAKIMEEINYIPNRAPGMLLN) constitute an HTH lacI-type domain. Residues 8–27 (LQDIATLAGVTKMTVSRYIR) constitute a DNA-binding region (H-T-H motif).

Functionally, idn operon regulator. May repress gntKU and gntT genes when growing on L-idonate. The polypeptide is HTH-type transcriptional regulator IdnR (idnR) (Escherichia coli (strain K12)).